Reading from the N-terminus, the 640-residue chain is 1-deoxy-D-xylulose-5-phosphate synthase (640 aa).

Residues histidine 79 and glycine 120–serine 122 each bind thiamine diphosphate. Aspartate 151 contributes to the Mg(2+) binding site. Residues glycine 152–serine 153, asparagine 180, tyrosine 290, and glutamate 372 each bind thiamine diphosphate. Asparagine 180 contacts Mg(2+).

This sequence belongs to the transketolase family. DXPS subfamily. In terms of assembly, homodimer. Mg(2+) is required as a cofactor. The cofactor is thiamine diphosphate.

It catalyses the reaction D-glyceraldehyde 3-phosphate + pyruvate + H(+) = 1-deoxy-D-xylulose 5-phosphate + CO2. It participates in metabolic intermediate biosynthesis; 1-deoxy-D-xylulose 5-phosphate biosynthesis; 1-deoxy-D-xylulose 5-phosphate from D-glyceraldehyde 3-phosphate and pyruvate: step 1/1. Functionally, catalyzes the acyloin condensation reaction between C atoms 2 and 3 of pyruvate and glyceraldehyde 3-phosphate to yield 1-deoxy-D-xylulose-5-phosphate (DXP). The sequence is that of 1-deoxy-D-xylulose-5-phosphate synthase from Rhodopseudomonas palustris (strain BisA53).